We begin with the raw amino-acid sequence, 246 residues long: Adenosine 5'-phosphosulfate reductase (246 aa).

[4Fe-4S] cluster is bound by residues C131, C132, C214, and C217. Residue C242 is the Nucleophile; cysteine thiosulfonate intermediate of the active site.

Belongs to the PAPS reductase family. CysH subfamily. It depends on [4Fe-4S] cluster as a cofactor.

It is found in the cytoplasm. The enzyme catalyses [thioredoxin]-disulfide + sulfite + AMP + 2 H(+) = adenosine 5'-phosphosulfate + [thioredoxin]-dithiol. Its pathway is sulfur metabolism; hydrogen sulfide biosynthesis; sulfite from sulfate. Functionally, catalyzes the formation of sulfite from adenosine 5'-phosphosulfate (APS) using thioredoxin as an electron donor. The polypeptide is Adenosine 5'-phosphosulfate reductase (Neisseria meningitidis serogroup B (strain ATCC BAA-335 / MC58)).